Here is a 241-residue protein sequence, read N- to C-terminus: Aspartate/glutamate leucyltransferase (241 aa).

Belongs to the R-transferase family. Bpt subfamily.

It is found in the cytoplasm. It catalyses the reaction N-terminal L-glutamyl-[protein] + L-leucyl-tRNA(Leu) = N-terminal L-leucyl-L-glutamyl-[protein] + tRNA(Leu) + H(+). The enzyme catalyses N-terminal L-aspartyl-[protein] + L-leucyl-tRNA(Leu) = N-terminal L-leucyl-L-aspartyl-[protein] + tRNA(Leu) + H(+). Functions in the N-end rule pathway of protein degradation where it conjugates Leu from its aminoacyl-tRNA to the N-termini of proteins containing an N-terminal aspartate or glutamate. The protein is Aspartate/glutamate leucyltransferase of Helicobacter hepaticus (strain ATCC 51449 / 3B1).